The sequence spans 256 residues: Exosome complex component RRP41-like (256 aa).

It belongs to the RNase PH family. In terms of assembly, probable component of the RNA exosome complex. As to expression, highly expressed in imbibed seeds and young seedlings.

The protein resides in the cytoplasm. It is found in the nucleus. Its function is as follows. Non-catalytic component of the RNA exosome complex which has 3'-&gt;5' exoribonuclease activity and participates in a multitude of cellular RNA processing, maturation and degradation events. In vitro, is a processive phosphorolytic exonuclease and requires a single-stranded poly(A) tail on the substrate RNA for its activity. Plays an important role in seed germination and early seedling growth by mediating specific cytoplasmic mRNA decay of transcripts coding for the abscisic acid (ABA) biosynthetic enzymes NCED5 and NCED6, and the ABA signaling transcription factors ABI3 and ABI4. In Arabidopsis thaliana (Mouse-ear cress), this protein is Exosome complex component RRP41-like.